A 783-amino-acid polypeptide reads, in one-letter code: Probable phosphoketolase (783 aa).

Belongs to the XFP family. Thiamine diphosphate is required as a cofactor.

The polypeptide is Probable phosphoketolase (Rhodopseudomonas palustris (strain TIE-1)).